The primary structure comprises 190 residues: Protein GrpE (190 aa).

Basic and acidic residues predominate over residues M1–K10. The interval M1–Q42 is disordered. Residues S12–A30 are compositionally biased toward low complexity. Basic and acidic residues predominate over residues P32 to Q42.

This sequence belongs to the GrpE family. In terms of assembly, homodimer.

The protein resides in the cytoplasm. Its function is as follows. Participates actively in the response to hyperosmotic and heat shock by preventing the aggregation of stress-denatured proteins, in association with DnaK and GrpE. It is the nucleotide exchange factor for DnaK and may function as a thermosensor. Unfolded proteins bind initially to DnaJ; upon interaction with the DnaJ-bound protein, DnaK hydrolyzes its bound ATP, resulting in the formation of a stable complex. GrpE releases ADP from DnaK; ATP binding to DnaK triggers the release of the substrate protein, thus completing the reaction cycle. Several rounds of ATP-dependent interactions between DnaJ, DnaK and GrpE are required for fully efficient folding. This chain is Protein GrpE, found in Pelobacter propionicus (strain DSM 2379 / NBRC 103807 / OttBd1).